Consider the following 261-residue polypeptide: Cytochrome c oxidase subunit 3 (261 aa).

Topologically, residues 1-15 are mitochondrial matrix; the sequence is MAHQAHAYHMVDPSP. Residues 16–34 traverse the membrane as a helical segment; that stretch reads WPITGATAALLVTSGLAAW. Residues 35 to 40 lie on the Mitochondrial intermembrane side of the membrane; it reads FHFNSM. A helical membrane pass occupies residues 41 to 66; that stretch reads ILILMGLTLLLLTMYQWWRDIIREST. At 67-72 the chain is on the mitochondrial matrix side; sequence FQGHHT. A helical membrane pass occupies residues 73 to 105; sequence LPVQKSLRYGMILFITSEVFFFLGFFWAFYHSS. Over 106–128 the chain is Mitochondrial intermembrane; that stretch reads LAPTPELGGLWPPTGITPLDPFE. The chain crosses the membrane as a helical span at residues 129 to 152; the sequence is VPLLNTAVLLASGITVTWAHHSLM. Over 153–155 the chain is Mitochondrial matrix; it reads EGQ. Residues 156-183 form a helical membrane-spanning segment; sequence RKEAIQSLFITVLLGLYFTALQATEYYE. The Mitochondrial intermembrane portion of the chain corresponds to 184–190; the sequence is SPFTIAD. The chain crosses the membrane as a helical span at residues 191–223; it reads GAYGSTFFVATGFHGLHVIIGSTFLIVCLVRQT. The Mitochondrial matrix portion of the chain corresponds to 224-232; it reads QYHFTSNHH. A helical membrane pass occupies residues 233–256; sequence FGFEAAAWYWHFVDVVWLFLYVSI. Over 257–261 the chain is Mitochondrial intermembrane; it reads YWWGS.

This sequence belongs to the cytochrome c oxidase subunit 3 family. As to quaternary structure, component of the cytochrome c oxidase (complex IV, CIV), a multisubunit enzyme composed of 14 subunits. The complex is composed of a catalytic core of 3 subunits MT-CO1, MT-CO2 and MT-CO3, encoded in the mitochondrial DNA, and 11 supernumerary subunits COX4I, COX5A, COX5B, COX6A, COX6B, COX6C, COX7A, COX7B, COX7C, COX8 and NDUFA4, which are encoded in the nuclear genome. The complex exists as a monomer or a dimer and forms supercomplexes (SCs) in the inner mitochondrial membrane with NADH-ubiquinone oxidoreductase (complex I, CI) and ubiquinol-cytochrome c oxidoreductase (cytochrome b-c1 complex, complex III, CIII), resulting in different assemblies (supercomplex SCI(1)III(2)IV(1) and megacomplex MCI(2)III(2)IV(2)).

The protein resides in the mitochondrion inner membrane. It catalyses the reaction 4 Fe(II)-[cytochrome c] + O2 + 8 H(+)(in) = 4 Fe(III)-[cytochrome c] + 2 H2O + 4 H(+)(out). Component of the cytochrome c oxidase, the last enzyme in the mitochondrial electron transport chain which drives oxidative phosphorylation. The respiratory chain contains 3 multisubunit complexes succinate dehydrogenase (complex II, CII), ubiquinol-cytochrome c oxidoreductase (cytochrome b-c1 complex, complex III, CIII) and cytochrome c oxidase (complex IV, CIV), that cooperate to transfer electrons derived from NADH and succinate to molecular oxygen, creating an electrochemical gradient over the inner membrane that drives transmembrane transport and the ATP synthase. Cytochrome c oxidase is the component of the respiratory chain that catalyzes the reduction of oxygen to water. Electrons originating from reduced cytochrome c in the intermembrane space (IMS) are transferred via the dinuclear copper A center (CU(A)) of subunit 2 and heme A of subunit 1 to the active site in subunit 1, a binuclear center (BNC) formed by heme A3 and copper B (CU(B)). The BNC reduces molecular oxygen to 2 water molecules using 4 electrons from cytochrome c in the IMS and 4 protons from the mitochondrial matrix. This Latimeria chalumnae (Coelacanth) protein is Cytochrome c oxidase subunit 3 (MT-CO3).